The chain runs to 170 residues: Copper transporter 1 (170 aa).

Residues 1 to 29 (MDHDHMHGMPRPSSSSSSSPSSMMNNGSM) form a disordered region. Low complexity predominate over residues 9–29 (MPRPSSSSSSSPSSMMNNGSM). The next 2 helical transmembrane spans lie at 65–85 (GMYA…EWLA) and 114–134 (IGLA…VFLV).

This sequence belongs to the copper transporter (Ctr) (TC 1.A.56) family. SLC31A subfamily. In terms of tissue distribution, expressed in the root apex, lateral root primordia, embryo, trichomes, guard cells and pollen grains.

It is found in the membrane. In terms of biological role, copper transporter involved in copper acquisition and transport in leaves. Required for copper homeostasis and normal plant growth and development. This Arabidopsis thaliana (Mouse-ear cress) protein is Copper transporter 1 (COPT1).